The chain runs to 416 residues: Thioredoxin domain-containing protein 5 homolog (416 aa).

The first 25 residues, 1-25 (MLTRSILSVAVCGLLLSPLLPITRA), serve as a signal peptide directing secretion. Thioredoxin domains are found at residues 26-145 (SQEE…KELS), 150-272 (ADLG…KMVG), and 293-412 (AGEE…KFLG). Intrachain disulfides connect Cys-65-Cys-68, Cys-194-Cys-197, and Cys-331-Cys-334. The short motif at 413-416 (HDEL) is the Prevents secretion from ER element.

Belongs to the protein disulfide isomerase family.

Its subcellular location is the endoplasmic reticulum. The protein resides in the cell surface. In terms of biological role, possesses thioredoxin activity. Acts as a ligand for Drpr and is required for the phagocytosis of apoptotic cells. Binds to the extracellular region of Drpr and augments Drpr tyrosine phosphorylation. The sequence is that of Thioredoxin domain-containing protein 5 homolog from Drosophila melanogaster (Fruit fly).